The following is a 140-amino-acid chain: Ribosome-binding factor A (140 aa).

Residues 118–133 (DEAKQQKHNGKDKTDT) show a composition bias toward basic and acidic residues. Residues 118-140 (DEAKQQKHNGKDKTDTADSEGEE) form a disordered region.

This sequence belongs to the RbfA family. In terms of assembly, monomer. Binds 30S ribosomal subunits, but not 50S ribosomal subunits or 70S ribosomes.

Its subcellular location is the cytoplasm. One of several proteins that assist in the late maturation steps of the functional core of the 30S ribosomal subunit. Associates with free 30S ribosomal subunits (but not with 30S subunits that are part of 70S ribosomes or polysomes). Required for efficient processing of 16S rRNA. May interact with the 5'-terminal helix region of 16S rRNA. The chain is Ribosome-binding factor A from Shewanella woodyi (strain ATCC 51908 / MS32).